Reading from the N-terminus, the 127-residue chain is Small integral membrane protein 33 (127 aa).

An N-linked (GlcNAc...) asparagine glycan is attached at N15. Residues 38–58 traverse the membrane as a helical segment; it reads PLLAAIIAAFVLLAICIVLAV.

It is found in the membrane. In Mus musculus (Mouse), this protein is Small integral membrane protein 33.